The sequence spans 154 residues: Myoglobin (154 aa).

The 147-residue stretch at 2–148 folds into the Globin domain; that stretch reads GLSDGEWQLV…FRNDMAAQYK (147 aa). The residue at position 4 (Ser4) is a Phosphoserine. His65 is a binding site for nitrite. Residue His65 participates in O2 binding. Residue Thr68 is modified to Phosphothreonine. Residue His94 coordinates heme b.

As to quaternary structure, monomer.

The protein localises to the cytoplasm. Its subcellular location is the sarcoplasm. It carries out the reaction Fe(III)-heme b-[protein] + nitric oxide + H2O = Fe(II)-heme b-[protein] + nitrite + 2 H(+). It catalyses the reaction H2O2 + AH2 = A + 2 H2O. Functionally, monomeric heme protein which primary function is to store oxygen and facilitate its diffusion within muscle tissues. Reversibly binds oxygen through a pentacoordinated heme iron and enables its timely and efficient release as needed during periods of heightened demand. Depending on the oxidative conditions of tissues and cells, and in addition to its ability to bind oxygen, it also has a nitrite reductase activity whereby it regulates the production of bioactive nitric oxide. Under stress conditions, like hypoxia and anoxia, it also protects cells against reactive oxygen species thanks to its pseudoperoxidase activity. This is Myoglobin from Rangifer tarandus (Reindeer).